The following is a 248-amino-acid chain: MERASLIQKAKLAEQAERYEDMAAFMKSAVEKGEELSCEERNLLSVAYKNVVGGQRAAWRVLSSIEQKSNEEGSEEKGPEVKEYREKVETELRGVCDTVLGLLDSHLIKGAGDAESRVFYLKMKGDYYRYLAEVATGDDKKRIIDSARSAYQEAMDISKKEMPPTNPIRLGLALNFSVFHYEIANSPEEAISLAKTTFDEAMADLHTLSEDSYKDSTLIMQLLRDNLTLWTADSAGEEGGEAPEEPQS.

A phosphoserine mark is found at S5, S74, and S248.

It belongs to the 14-3-3 family. In terms of assembly, homodimer. Interacts with KRT17 and SAMSN1. Found in a complex with XPO7, EIF4A1, ARHGAP1, VPS26A, VPS29 and VPS35. Interacts with GAB2. Interacts with SRPK2. Interacts with COPS6. Interacts with COP1; this interaction leads to proteasomal degradation. Interacts with the 'Thr-369' phosphorylated form of DAPK2. Interacts with PI4KB. Interacts with SLITRK1. Interacts with LRRK2; this interaction is dependent on LRRK2 phosphorylation. Interacts with PKP3 (via N-terminus); the interaction maintains the cytoplasmic pool of PKP3, facilitates PKP3 exchange at desmosomes and restricts PKP3 localization to existing desmosome cell junctions. Interacts with LCP2. Ubiquitinated. Ubiquitination by RFFL induces proteasomal degradation and indirectly regulates p53/TP53 activation. In terms of tissue distribution, expressed in dorsal skin (at protein level). Expressed in the basal layer of skin epithelium and in outer root sheath of hair follicle.

The protein localises to the cytoplasm. Its subcellular location is the nucleus. The protein resides in the secreted. Functionally, adapter protein implicated in the regulation of a large spectrum of both general and specialized signaling pathways. Binds to a large number of partners, usually by recognition of a phosphoserine or phosphothreonine motif. Binding generally results in the modulation of the activity of the binding partner. Promotes cytosolic retention of GBP1 GTPase by binding to phosphorylated GBP1, thereby inhibiting the innate immune response. Also acts as a TP53/p53-regulated inhibitor of G2/M progression. When bound to KRT17, regulates protein synthesis and epithelial cell growth by stimulating Akt/mTOR pathway. Acts to maintain desmosome cell junction adhesion in epithelial cells via interacting with and sequestering PKP3 to the cytoplasm, thereby restricting its translocation to existing desmosome structures and therefore maintaining desmosome protein homeostasis. Also acts to facilitate PKP3 exchange at desmosome plaques, thereby maintaining keratinocyte intercellular adhesion. May also regulate MDM2 autoubiquitination and degradation and thereby activate p53/TP53. In Mus musculus (Mouse), this protein is 14-3-3 protein sigma (Sfn).